Reading from the N-terminus, the 338-residue chain is Uroporphyrinogen decarboxylase (338 aa).

Residues 23-27 (RQAGR), Asp-72, Tyr-146, Thr-201, and His-312 contribute to the substrate site.

The protein belongs to the uroporphyrinogen decarboxylase family. As to quaternary structure, homodimer.

The protein localises to the cytoplasm. It catalyses the reaction uroporphyrinogen III + 4 H(+) = coproporphyrinogen III + 4 CO2. It functions in the pathway porphyrin-containing compound metabolism; protoporphyrin-IX biosynthesis; coproporphyrinogen-III from 5-aminolevulinate: step 4/4. Functionally, catalyzes the decarboxylation of four acetate groups of uroporphyrinogen-III to yield coproporphyrinogen-III. In Thermodesulfovibrio yellowstonii (strain ATCC 51303 / DSM 11347 / YP87), this protein is Uroporphyrinogen decarboxylase.